The following is a 1568-amino-acid chain: Myosin-2 (1568 aa).

The 54-residue stretch at 4-57 folds into the Myosin N-terminal SH3-like domain; it reads EVGTRCWYPHKELGWIGAEVIKNEVKDGKYHLELSLEDDEVVSVDTEDLNDDKN. The Myosin motor domain maps to 70 to 783; it reads EATEDLTSLS…MLAYLEKLRS (714 aa). 164–171 contacts ATP; the sequence is GESGAGKT. The tract at residues 443 to 523 is actin-binding; it reads FIGVLDIYGF…LGILSLLDEE (81 aa). Residues 619 to 641 form a disordered region; sequence KKAELEQNNPGNKKPGPARTVNR. 6 consecutive IQ domains span residues 786 to 808, 809 to 833, 834 to 856, 857 to 881, 882 to 904, and 905 to 934; these read MHNSIVTIQKKIRAKYYRNQYLK, ISQAIKIWQSNTRGFIIRHRVYHEM, KVHSATLIQATYRGYAIRKNVFN, VLITIINLQTRIREELKRKQLKREH, EYNAAVTIQSKVRTFEPRSTFLN, and TKRDTVVVQSLIRRRAAQGRLRQLKSDAKS. Positions 944-1088 form a coiled coil; it reads KLENKVIELT…ISRLQTAMSL (145 aa). The interval 1089–1568 is non alpha-helical, tail domain; the sequence is GTVTTSVLPQ…VAQQVVQDGH (480 aa). One can recognise a Dilute domain in the interval 1223–1498; that stretch reads AQVLTTIQKV…LRYVADIVKK (276 aa).

Belongs to the TRAFAC class myosin-kinesin ATPase superfamily. Myosin family. Homodimer. Interacts with calmodulin (CMD1) and the myosin light chain MLC1 through its IQ repeats.

In terms of biological role, myosin heavy chain that is required for the cell cycle-regulated transport of various organelles and proteins for their segregation. Functions by binding with its tail domain to receptor proteins on organelles and exerting force with its N-terminal motor domain against actin filaments, thereby transporting its cargo along polarized actin cables. This is Myosin-2 (MYO2) from Saccharomyces uvarum (strain ATCC 76518 / CBS 7001 / CLIB 283 / NBRC 10550 / MCYC 623 / NCYC 2669 / NRRL Y-11845) (Yeast).